The following is a 272-amino-acid chain: GPN-loop GTPase 3 (272 aa).

12–17 (GAGKST) contacts GTP. The Gly-Pro-Asn (GPN)-loop; involved in dimer interface motif lies at 69-71 (GPN). GTP is bound at residue 172 to 175 (SKMD). The disordered stretch occupies residues 253-272 (QYGEDEEPKVPKDMDDGDFD).

The protein belongs to the GPN-loop GTPase family. As to quaternary structure, heterodimers with GPN1 or GPN2. Binds to RNA polymerase II (RNAPII).

Its function is as follows. Small GTPase required for proper nuclear import of RNA polymerase II and III (RNAPII and RNAPIII). May act at an RNAP assembly step prior to nuclear import. The sequence is that of GPN-loop GTPase 3 from Cryptococcus neoformans var. neoformans serotype D (strain JEC21 / ATCC MYA-565) (Filobasidiella neoformans).